Consider the following 359-residue polypeptide: Guanine nucleotide-binding protein subunit alpha-11 (359 aa).

2 S-palmitoyl cysteine lipidation sites follow: cysteine 9 and cysteine 10. One can recognise a G-alpha domain in the interval 38 to 359 (RELKLLLLGT…QLNLKEYNLV (322 aa)). Residues 41 to 54 (KLLLLGTGESGKST) form a G1 motif region. GTP is bound by residues 46–53 (GTGESGKS) and 180–183 (LRVR). Serine 53 lines the Mg(2+) pocket. Residues 178–186 (DVLRVRVPT) are G2 motif. Threonine 186 provides a ligand contact to Mg(2+). The interval 201 to 210 (FRMVDVGGQR) is G3 motif. A G4 motif region spans residues 270–277 (ILFLNKKD). GTP is bound by residues 274-277 (NKKD) and alanine 331. The interval 329–334 (TCATDT) is G5 motif.

This sequence belongs to the G-alpha family. G(q) subfamily. G proteins are composed of 3 units; alpha, beta and gamma. The alpha chain contains the guanine nucleotide binding site. Interacts with RGS22. Interacts with NTSR1.

It localises to the cell membrane. It is found in the cytoplasm. The enzyme catalyses GTP + H2O = GDP + phosphate + H(+). Guanine nucleotide-binding proteins (G proteins) function as transducers downstream of G protein-coupled receptors (GPCRs) in numerous signaling cascades. The alpha chain contains the guanine nucleotide binding site and alternates between an active, GTP-bound state and an inactive, GDP-bound state. Signaling by an activated GPCR promotes GDP release and GTP binding. The alpha subunit has a low GTPase activity that converts bound GTP to GDP, thereby terminating the signal. Both GDP release and GTP hydrolysis are modulated by numerous regulatory proteins. Signaling is mediated via phospholipase C-beta-dependent inositol lipid hydrolysis for signal propagation: activates phospholipase C-beta: following GPCR activation, GNA11 activates PLC-beta (PLCB1, PLCB2, PLCB3 or PLCB4), leading to production of diacylglycerol (DAG) and inositol 1,4,5-trisphosphate (IP3). Transduces FFAR4 signaling in response to long-chain fatty acids (LCFAs). Together with GNAQ, required for heart development. In the respiratory epithelium, transmits OXGR1-dependent signals that lead to downstream intracellular Ca(2+) release and mucocilliary clearance of airborne pathogens. The sequence is that of Guanine nucleotide-binding protein subunit alpha-11 (Gna11) from Rattus norvegicus (Rat).